A 153-amino-acid polypeptide reads, in one-letter code: 6,7-dimethyl-8-ribityllumazine synthase (153 aa).

5-amino-6-(D-ribitylamino)uracil contacts are provided by residues Phe-22, 56 to 58 (AFE), and 80 to 82 (AVI). 85-86 (GT) contacts (2S)-2-hydroxy-3-oxobutyl phosphate. Catalysis depends on His-88, which acts as the Proton donor. Residue Phe-113 coordinates 5-amino-6-(D-ribitylamino)uracil. Arg-127 is a binding site for (2S)-2-hydroxy-3-oxobutyl phosphate.

It belongs to the DMRL synthase family. In terms of assembly, forms an icosahedral capsid composed of 60 subunits, arranged as a dodecamer of pentamers.

The enzyme catalyses (2S)-2-hydroxy-3-oxobutyl phosphate + 5-amino-6-(D-ribitylamino)uracil = 6,7-dimethyl-8-(1-D-ribityl)lumazine + phosphate + 2 H2O + H(+). Its pathway is cofactor biosynthesis; riboflavin biosynthesis; riboflavin from 2-hydroxy-3-oxobutyl phosphate and 5-amino-6-(D-ribitylamino)uracil: step 1/2. Catalyzes the formation of 6,7-dimethyl-8-ribityllumazine by condensation of 5-amino-6-(D-ribitylamino)uracil with 3,4-dihydroxy-2-butanone 4-phosphate. This is the penultimate step in the biosynthesis of riboflavin. This is 6,7-dimethyl-8-ribityllumazine synthase from Hydrogenovibrio crunogenus (strain DSM 25203 / XCL-2) (Thiomicrospira crunogena).